An 89-amino-acid polypeptide reads, in one-letter code: Small ribosomal subunit protein bS16 (89 aa).

This sequence belongs to the bacterial ribosomal protein bS16 family.

The polypeptide is Small ribosomal subunit protein bS16 (Chloroflexus aurantiacus (strain ATCC 29364 / DSM 637 / Y-400-fl)).